The primary structure comprises 315 residues: Homoserine kinase (315 aa).

Residue 97 to 107 coordinates ATP; it reads PPARGLGSSAT.

It belongs to the GHMP kinase family. Homoserine kinase subfamily.

The protein resides in the cytoplasm. It carries out the reaction L-homoserine + ATP = O-phospho-L-homoserine + ADP + H(+). The protein operates within amino-acid biosynthesis; L-threonine biosynthesis; L-threonine from L-aspartate: step 4/5. Functionally, catalyzes the ATP-dependent phosphorylation of L-homoserine to L-homoserine phosphate. This chain is Homoserine kinase, found in Prochlorococcus marinus subsp. pastoris (strain CCMP1986 / NIES-2087 / MED4).